Consider the following 247-residue polypeptide: ATP synthase subunit a (247 aa).

The next 6 membrane-spanning stretches (helical) occupy residues 24 to 44 (IAFT…SLLM), 82 to 102 (FFPF…VGII), 112 to 132 (IIVT…YGFY), 141 to 161 (LFVP…IEVI), 194 to 214 (MLGA…ALVV), and 219 to 239 (LELL…CIYI).

This sequence belongs to the ATPase A chain family. F-type ATPases have 2 components, CF(1) - the catalytic core - and CF(0) - the membrane proton channel. CF(1) has five subunits: alpha(3), beta(3), gamma(1), delta(1), epsilon(1). CF(0) has three main subunits: a(1), b(2) and c(9-12). The alpha and beta chains form an alternating ring which encloses part of the gamma chain. CF(1) is attached to CF(0) by a central stalk formed by the gamma and epsilon chains, while a peripheral stalk is formed by the delta and b chains.

The protein resides in the cell inner membrane. Its function is as follows. Key component of the proton channel; it plays a direct role in the translocation of protons across the membrane. This Nitrobacter winogradskyi (strain ATCC 25391 / DSM 10237 / CIP 104748 / NCIMB 11846 / Nb-255) protein is ATP synthase subunit a.